Reading from the N-terminus, the 842-residue chain is Elongation factor 2 (842 aa).

In terms of domain architecture, tr-type G spans 17–253 (TNVRNMSVIA…LWGDSYFNPK (237 aa)). Residues 26–33 (AHVDHGKS), 158–161 (NKVD), and 213–215 (SGL) contribute to the GTP site. His-699 bears the Diphthamide mark.

Belongs to the TRAFAC class translation factor GTPase superfamily. Classic translation factor GTPase family. EF-G/EF-2 subfamily.

The protein localises to the cytoplasm. The catalysed reaction is GTP + H2O = GDP + phosphate + H(+). Functionally, catalyzes the GTP-dependent ribosomal translocation step during translation elongation. During this step, the ribosome changes from the pre-translocational (PRE) to the post-translocational (POST) state as the newly formed A-site-bound peptidyl-tRNA and P-site-bound deacylated tRNA move to the P and E sites, respectively. Catalyzes the coordinated movement of the two tRNA molecules, the mRNA and conformational changes in the ribosome. The polypeptide is Elongation factor 2 (EFT1) (Debaryomyces hansenii (strain ATCC 36239 / CBS 767 / BCRC 21394 / JCM 1990 / NBRC 0083 / IGC 2968) (Yeast)).